Here is a 332-residue protein sequence, read N- to C-terminus: MKLKLVEISSIIRGGANIYVNNKLVATTHNNVTPSFILSLIKSIIGVSAIYGGYFEMPSTATAKLFYKNTPVTSAVLSHTSFTEETISGYEHTRIIFTFSDASRTKYSFDSLQLWTASTHALLSHVSDIALTSPLKKNPQDVVQIDWWIEMESGQPFANILSYLQQQQATYCTSSCTIPSVVPNMVYGYSVFNAFFILLALPNVIQVARDIKTPLTNYLVEGLTLASQVKPQGITSVICYDVCNCQMTTNPQQGTVSEFIGDNYVYVAFNFNNPCPSSEYVVPISTLDLGNGYELQFAVAGVPSNGTGASALLIKIPYGKATLKNLFTHQGE.

The chain crosses the membrane as a helical span at residues 185–205; sequence MVYGYSVFNAFFILLALPNVI.

The protein resides in the host membrane. This is an uncharacterized protein from Sulfolobus islandicus filamentous virus (isolate Iceland/Hveragerdi) (SIFV).